The following is a 190-amino-acid chain: UPF0301 protein TC_0483 (190 aa).

Belongs to the UPF0301 (AlgH) family.

The protein is UPF0301 protein TC_0483 of Chlamydia muridarum (strain MoPn / Nigg).